A 361-amino-acid chain; its full sequence is Histidinol-phosphate aminotransferase (361 aa).

K219 carries the N6-(pyridoxal phosphate)lysine modification.

Belongs to the class-II pyridoxal-phosphate-dependent aminotransferase family. Histidinol-phosphate aminotransferase subfamily. In terms of assembly, homodimer. The cofactor is pyridoxal 5'-phosphate.

It catalyses the reaction L-histidinol phosphate + 2-oxoglutarate = 3-(imidazol-4-yl)-2-oxopropyl phosphate + L-glutamate. Its pathway is amino-acid biosynthesis; L-histidine biosynthesis; L-histidine from 5-phospho-alpha-D-ribose 1-diphosphate: step 7/9. This is Histidinol-phosphate aminotransferase from Acinetobacter baumannii (strain ACICU).